The following is a 137-amino-acid chain: Holo-[acyl-carrier-protein] synthase (137 aa).

Residues D8 and E57 each coordinate Mg(2+).

The protein belongs to the P-Pant transferase superfamily. AcpS family. Mg(2+) is required as a cofactor.

Its subcellular location is the cytoplasm. It carries out the reaction apo-[ACP] + CoA = holo-[ACP] + adenosine 3',5'-bisphosphate + H(+). Transfers the 4'-phosphopantetheine moiety from coenzyme A to a Ser of acyl-carrier-protein. The protein is Holo-[acyl-carrier-protein] synthase of Cereibacter sphaeroides (strain ATCC 17029 / ATH 2.4.9) (Rhodobacter sphaeroides).